A 308-amino-acid chain; its full sequence is Glycine--tRNA ligase alpha subunit (308 aa).

The protein belongs to the class-II aminoacyl-tRNA synthetase family. Tetramer of two alpha and two beta subunits.

It localises to the cytoplasm. The enzyme catalyses tRNA(Gly) + glycine + ATP = glycyl-tRNA(Gly) + AMP + diphosphate. In Brucella canis (strain ATCC 23365 / NCTC 10854 / RM-666), this protein is Glycine--tRNA ligase alpha subunit.